Reading from the N-terminus, the 321-residue chain is MGQKVSRTDFEWVYTEEPHASRRKIILEKYPQIKKLFGHDPNFKWVAGAMVLTQILALFVVKDLSWSWLIVAAYCFGGIINHSLMLAVHEISHNLAFGHSRPMHNRILGFICNLPIGLPMSISFKKYHLEHHRYQGDEAIDTDIPTLLEARLFDTTFGKFLWVCLQPFFYIFRPLIINPKPPTRLEIINTVVQLTFNALIVYFLGWKPLAYLLIGSILAMGLHPVAGHFISEHYMFAKGFETYSYYGPLNWITFNVGYHNEHHDFPAVPGSRLPEVKRIAKEFYDTMPQHTSWTRVLYDFIMDPAVGPYARVKRRQRGLAS.

A run of 6 helical transmembrane segments spans residues Pro-41–Val-61, Trp-68–Val-88, Ile-107–Tyr-127, Phe-157–Ile-177, Ile-187–Trp-206, and Pro-208–Ile-230.

Belongs to the fatty acid desaturase type 1 family. DEGS subfamily. Testes.

Its subcellular location is the endoplasmic reticulum membrane. It is found in the membrane. It localises to the mitochondrion. It catalyses the reaction an N-acylsphinganine + 2 Fe(II)-[cytochrome b5] + O2 + 2 H(+) = an N-acylsphing-4-enine + 2 Fe(III)-[cytochrome b5] + 2 H2O. The enzyme catalyses an N-acyleicosasphinganine + 2 Fe(II)-[cytochrome b5] + O2 + 2 H(+) = an N-acyleicosasphing-4-enine + 2 Fe(III)-[cytochrome b5] + 2 H2O. It participates in sphingolipid metabolism. In terms of biological role, has sphingolipid-delta-4-desaturase activity. Converts sphinganine-containing sphingolipids (such as N-acylsphinganines or dihydroceramides) into sphingolipids containing the delta-4-desaturated sphingoid base (E)-sphing-4-enine (such as N-acylsphing-4-enines or ceramides), which are required for many different functions (structural functions as well as signaling). Required to initiate spermatid differentiation among other signals. Required for central spindle assembly and cytokinesis during male meiosis, may act as part of an anchoring mechanism that links membrane-bounded cellular compartments to components of the cytoskeleton. The chain is Sphingolipid delta(4)-desaturase DES1 from Drosophila melanogaster (Fruit fly).